A 238-amino-acid polypeptide reads, in one-letter code: Ribonuclease PH (238 aa).

Phosphate-binding positions include arginine 86 and 124 to 126 (GTR).

This sequence belongs to the RNase PH family. As to quaternary structure, homohexameric ring arranged as a trimer of dimers.

The enzyme catalyses tRNA(n+1) + phosphate = tRNA(n) + a ribonucleoside 5'-diphosphate. In terms of biological role, phosphorolytic 3'-5' exoribonuclease that plays an important role in tRNA 3'-end maturation. Removes nucleotide residues following the 3'-CCA terminus of tRNAs; can also add nucleotides to the ends of RNA molecules by using nucleoside diphosphates as substrates, but this may not be physiologically important. Probably plays a role in initiation of 16S rRNA degradation (leading to ribosome degradation) during starvation. This Haemophilus ducreyi (strain 35000HP / ATCC 700724) protein is Ribonuclease PH.